A 467-amino-acid chain; its full sequence is Ribulose bisphosphate carboxylase large chain (467 aa).

A propeptide spanning residues Met1 to Ser2 is cleaved from the precursor. Pro3 carries the post-translational modification N-acetylproline. Lys14 is subject to N6,N6,N6-trimethyllysine. Substrate contacts are provided by Asn123 and Thr173. Lys175 serves as the catalytic Proton acceptor. Lys177 contacts substrate. Mg(2+) contacts are provided by Lys201, Asp203, and Glu204. Residue Lys201 is modified to N6-carboxylysine. His294 acts as the Proton acceptor in catalysis. Positions 295, 327, and 379 each coordinate substrate.

This sequence belongs to the RuBisCO large chain family. Type I subfamily. Heterohexadecamer of 8 large chains and 8 small chains; disulfide-linked. The disulfide link is formed within the large subunit homodimers. It depends on Mg(2+) as a cofactor. In terms of processing, the disulfide bond which can form in the large chain dimeric partners within the hexadecamer appears to be associated with oxidative stress and protein turnover.

The protein resides in the plastid. It is found in the chloroplast. It catalyses the reaction 2 (2R)-3-phosphoglycerate + 2 H(+) = D-ribulose 1,5-bisphosphate + CO2 + H2O. The enzyme catalyses D-ribulose 1,5-bisphosphate + O2 = 2-phosphoglycolate + (2R)-3-phosphoglycerate + 2 H(+). In terms of biological role, ruBisCO catalyzes two reactions: the carboxylation of D-ribulose 1,5-bisphosphate, the primary event in carbon dioxide fixation, as well as the oxidative fragmentation of the pentose substrate in the photorespiration process. Both reactions occur simultaneously and in competition at the same active site. This Calamus usitatus (Palm tree) protein is Ribulose bisphosphate carboxylase large chain.